A 685-amino-acid polypeptide reads, in one-letter code: Protein hook (685 aa).

The Calponin-homology (CH) domain maps to 6–122 (MEIYESLIRW…RLLQLILGCA (117 aa)). Residues 134–570 (QIMELEESLQ…LLAADSRYKK (437 aa)) adopt a coiled-coil conformation. Disordered regions lie at residues 430 to 449 (AAED…SSDV), 593 to 625 (LEKP…SGRV), and 661 to 685 (PGQS…FAKK). Residues 602 to 623 (ASSSSATGSGGDASTLTSTGSG) show a composition bias toward low complexity. Over residues 661–670 (PGQSFLSRQR) the composition is skewed to polar residues.

It belongs to the hook family. In terms of assembly, homodimer. Interacts with microtubules via its N-terminus.

It is found in the cytoplasm. It localises to the cytoskeleton. Its subcellular location is the endosome. Functionally, involved in endocytic trafficking. Probably acts as a cytoskeletal linker protein that tethers endosome vesicles to the cytoskeleton. The polypeptide is Protein hook (Aedes aegypti (Yellowfever mosquito)).